A 140-amino-acid chain; its full sequence is D-ribose pyranase (140 aa).

Histidine 20 serves as the catalytic Proton donor. Substrate-binding positions include aspartate 28, histidine 99, and 121-123 (YSS).

It belongs to the RbsD / FucU family. RbsD subfamily. As to quaternary structure, homodecamer.

It is found in the cytoplasm. It catalyses the reaction beta-D-ribopyranose = beta-D-ribofuranose. Its pathway is carbohydrate metabolism; D-ribose degradation; D-ribose 5-phosphate from beta-D-ribopyranose: step 1/2. Functionally, catalyzes the interconversion of beta-pyran and beta-furan forms of D-ribose. The sequence is that of D-ribose pyranase from Pseudothermotoga lettingae (strain ATCC BAA-301 / DSM 14385 / NBRC 107922 / TMO) (Thermotoga lettingae).